The sequence spans 689 residues: MEQRHSLAGNCDDGEKSEREAQGFEHRTCMDSGDPSFGQNDPPTILPITAPKTYDSLTSQDMPETLTDTQALHEEQFHLLDQNGQPIQYDLQSLGNSTAQMTGMEQVAIPQEPFADEHSPQDISEEKPTGVRADVLEDSTSNYGLRSPASLVLPKKAGARLVEEPLLAPLQPLSCNTPMWACRLRSCEKIGDSYRGYCVSETELESVLTFHKQQTQTVWGTRQSPSPAKPATRLMWKSQYVPYDGIPFVNAGSRAVVMECQYGPRRKGFQLKKISEQESRSCHLYKATCPARIYIKKVQKFPEYRVPTDPQIDRKIIRLEQEKAFTMLKKNLMDAGGVLRWYVQLPTQQAHQYHESETPGVPLSPSPFPMSPLEEEEAIVRDENCALPSRLHPQVAHKIQELVSQGVGQVYAVRKQLRKFVERELFKPDEIPERHNLSYFPTVNDIKNHIHEVQKSLRTGDVVYNSEIIPATLQWTTDSGNILRETVTVTFAEGNLLGEPIPSKMGTSQTQTAVSPEPLSSFPPKIFTHFQALKLQPRLSSPDGSQALVSVDSHASSSPPGLVDTVGNAEVDNHSVLLGQSQNPGTDTCLTQDNSTSSSTGHLPESVPNPVAEDQLLEGEDVEDAGNPEGSVNRTLLGDVQTVPIQIIDSRPVLVEESLSKNQVKQETNEPTLSTEAKTFLDCKKISAT.

2 disordered regions span residues M1–L46 and S541–N609. Residues D13–C29 are compositionally biased toward basic and acidic residues. Composition is skewed to polar residues over residues S541–P559 and L578–G601.

In terms of tissue distribution, highly expressed in brain and testis.

The protein resides in the nucleus. Its function is as follows. Acts as a transcriptional activator that mediates the calcium- and neuron-selective induction of BDNF exon III transcription. Binds to the consensus calcium-response element CaRE1 5'-CTATTTCGAG-3' sequence. The chain is Calcium-responsive transcription factor (Carf) from Mus musculus (Mouse).